The primary structure comprises 1347 residues: Protein dispatched homolog 3 (1347 aa).

Over 1–67 the chain is Cytoplasmic; that stretch reads MDSEDDPLLQ…LGWAFTNPCC (67 aa). Residues 68–88 form a helical membrane-spanning segment; the sequence is AGLVLFLGCSIPMVLSAFMFL. Over 89–417 the chain is Lumenal; the sequence is YYPPLDIDIS…YEVRRTFNND (329 aa). The interval 156–207 is disordered; sequence GNHSRPASRAPRSAPRDTVATQTSAANSSERRRREAPSPEGQVTNQSRARRG. N-linked (GlcNAc...) asparagine glycosylation is present at N157. Residues 159-168 are compositionally biased toward low complexity; the sequence is SRPASRAPRS. An SSD domain is found at 412-570; the sequence is RTFNNDMLLA…LFTMPAALGL (159 aa). A helical membrane pass occupies residues 418–438; it reads MLLAFISSSCIAALVYILTSC. A topological domain (cytoplasmic) is located at residue S439. The helical transmembrane segment at 440–460 threads the bilayer; the sequence is VFLSFFGIASIGLSCLVALFL. The Lumenal portion of the chain corresponds to 461–463; sequence YHV. The chain crosses the membrane as a helical span at residues 464-484; sequence VFGIQYLGILNGVAAFVIVGI. Residues 485–528 are Cytoplasmic-facing; it reads GVDDVFVFINTYRQATHLEDPQLRMIHTIQTAGKATFFTSLTTA. Residues 529 to 549 traverse the membrane as a helical segment; it reads AAYAANVFSQIPAVHDFGLFM. Position 550 (S550) is a topological domain, lumenal. A helical transmembrane segment spans residues 551 to 571; it reads LIVTCCWLAVLFTMPAALGLW. Residues 572-684 lie on the Cytoplasmic side of the membrane; the sequence is SLYMAPLESS…WVLWAAVKSR (113 aa). The chain crosses the membrane as a helical span at residues 685–705; the sequence is WVIVGLFASILILSLVFASRL. Residues 706–1137 lie on the Lumenal side of the membrane; it reads RPASRAPLLF…IFMEIIGVQS (432 aa). N976 carries an N-linked (GlcNAc...) asparagine glycan. The chain crosses the membrane as a helical span at residues 1138-1158; sequence ALYGLVLSLLICVAAVAVFTT. Residue H1159 is a topological domain, cytoplasmic. The helical transmembrane segment at 1160–1180 threads the bilayer; the sequence is VLLLLPVLLSILGIVCLVVTI. The Lumenal portion of the chain corresponds to 1181 to 1246; the sequence is MYWSGWEMGA…TLEAVRHVGV (66 aa). A helical transmembrane segment spans residues 1247–1267; that stretch reads AIVSSALTTVIATVPLFFCII. At 1268–1281 the chain is on the cytoplasmic side; the sequence is APFAKFGKIVALNT. A helical transmembrane segment spans residues 1282 to 1302; the sequence is GVSILYTLTVSTALLGIMAPG. At 1303–1310 the chain is on the lumenal side; the sequence is SFTRTRTS. Residues 1311-1331 form a helical membrane-spanning segment; sequence FLKALGAVLLAGALGLGACLV. Topologically, residues 1332 to 1347 are cytoplasmic; the sequence is LLRSGYKIPLPSGATL.

It belongs to the patched family. In terms of tissue distribution, expressed in brain, retina, testis and thymus.

It is found in the endoplasmic reticulum membrane. The protein localises to the nucleus membrane. The protein resides in the cytoplasmic vesicle membrane. Plays a role in neuronal proliferation and differentiation. Plays a role in the accumulation of cellular cholesterol. Involved in intracellular lipid droplet formation. May contribute to cholesterol homeostasis in neuronal cells. This chain is Protein dispatched homolog 3, found in Mus musculus (Mouse).